The following is a 238-amino-acid chain: Probable transcriptional regulatory protein SSP2054 (238 aa).

This sequence belongs to the TACO1 family. YeeN subfamily.

The protein localises to the cytoplasm. In Staphylococcus saprophyticus subsp. saprophyticus (strain ATCC 15305 / DSM 20229 / NCIMB 8711 / NCTC 7292 / S-41), this protein is Probable transcriptional regulatory protein SSP2054.